A 192-amino-acid polypeptide reads, in one-letter code: ATP-dependent Clp protease proteolytic subunit 1 (192 aa).

S92 acts as the Nucleophile in catalysis. H117 is an active-site residue.

The protein belongs to the peptidase S14 family. As to quaternary structure, fourteen ClpP subunits assemble into 2 heptameric rings which stack back to back to give a disk-like structure with a central cavity, resembling the structure of eukaryotic proteasomes.

The protein resides in the cytoplasm. The enzyme catalyses Hydrolysis of proteins to small peptides in the presence of ATP and magnesium. alpha-casein is the usual test substrate. In the absence of ATP, only oligopeptides shorter than five residues are hydrolyzed (such as succinyl-Leu-Tyr-|-NHMec, and Leu-Tyr-Leu-|-Tyr-Trp, in which cleavage of the -Tyr-|-Leu- and -Tyr-|-Trp bonds also occurs).. Cleaves peptides in various proteins in a process that requires ATP hydrolysis. Has a chymotrypsin-like activity. Plays a major role in the degradation of misfolded proteins. This is ATP-dependent Clp protease proteolytic subunit 1 from Chlamydia abortus (strain DSM 27085 / S26/3) (Chlamydophila abortus).